Consider the following 106-residue polypeptide: V-type proton ATPase subunit G2 (106 aa).

Methionine 1 carries the N-acetylmethionine modification. The interval 31–67 (LKQAKEEAETEVAEHKTSTEQGFQRKLEATSGDSGAN) is disordered. Over residues 33 to 58 (QAKEEAETEVAEHKTSTEQGFQRKLE) the composition is skewed to basic and acidic residues.

The protein belongs to the V-ATPase G subunit family. In terms of assembly, V-ATPase is a heteromultimeric enzyme composed of a peripheral catalytic V1 complex (components A to H) attached to an integral membrane V0 proton pore complex (components: a, c, c'', d and e).

It localises to the vacuole membrane. Functionally, catalytic subunit of the peripheral V1 complex of vacuolar ATPase (V-ATPase). V-ATPase is responsible for acidifying a variety of intracellular compartments in eukaryotic cells. The sequence is that of V-type proton ATPase subunit G2 (VHA-G2) from Arabidopsis thaliana (Mouse-ear cress).